A 262-amino-acid chain; its full sequence is uncharacterized protein (262 aa).

A divalent metal cation is bound by residues His-7, His-9, Glu-96, His-132, His-156, and Asp-211.

The protein belongs to the metallo-dependent hydrolases superfamily. TatD-type hydrolase family. Requires a divalent metal cation as cofactor.

This is an uncharacterized protein from Mycoplasma genitalium (strain ATCC 33530 / DSM 19775 / NCTC 10195 / G37) (Mycoplasmoides genitalium).